We begin with the raw amino-acid sequence, 503 residues long: MKEYKVYLERARSRQQHFLYPLLFREYIYGLAYSHNFNRSIFLENVGYDKKYSLLIVKRLITRMYQKNHLILWANDSNKNSFWGYNKSFYSQIISEGFAMVVEIPFFLQLSSSLEEAEIIKSYKNLRSIHSIFPFLEDKLTYFNYVSDIRIPYPIHLEILVQILRYWVKDAPFFHLLRLFLCNWNSFLTTKKSISTFSKSHPRFFLFLYNFYVCEYESIFVFLRKKSSHLQLKSFSVFFERIFFYPKREHLVKVFAKDFLYTFTFVKDPNIHYVRYQGKCILASKNAPFLMNKWKHFFIHLWQCFFDVWSQPRMININPLSEHSFQLLGYFSNVRLNRSVVRSQMLQNTFLIEIVIKKLDITVPIIPLIRSLAKAKFCNVLGQPISKPVWADSSDFDIIDRFLRICRNLSHYYNGSSKKKSLYRIKYILRLSCIKTLACKHKSTVRAFLKRSGSEEFLQEFFTEEEEILSLIFPRDSSTLQRLHRNRIWYLDILFSNDLVHDE.

This sequence belongs to the intron maturase 2 family. MatK subfamily.

The protein resides in the plastid. It localises to the chloroplast. In terms of biological role, usually encoded in the trnK tRNA gene intron. Probably assists in splicing its own and other chloroplast group II introns. This chain is Maturase K, found in Vicia sativa (Spring vetch).